We begin with the raw amino-acid sequence, 766 residues long: Phosphoribosylformylglycinamidine synthase subunit PurL (766 aa).

The active site involves H49. Y52 and K91 together coordinate ATP. E93 contacts Mg(2+). Residues 94–97 (SHNH) and R116 each bind substrate. H95 acts as the Proton acceptor in catalysis. D117 serves as a coordination point for Mg(2+). Q240 contacts substrate. Mg(2+) is bound at residue D268. 312 to 314 (ESQ) contacts substrate. 2 residues coordinate ATP: D508 and G545. N546 contributes to the Mg(2+) binding site. S548 serves as a coordination point for substrate.

This sequence belongs to the FGAMS family. Monomer. Part of the FGAM synthase complex composed of 1 PurL, 1 PurQ and 2 PurS subunits.

It localises to the cytoplasm. It catalyses the reaction N(2)-formyl-N(1)-(5-phospho-beta-D-ribosyl)glycinamide + L-glutamine + ATP + H2O = 2-formamido-N(1)-(5-O-phospho-beta-D-ribosyl)acetamidine + L-glutamate + ADP + phosphate + H(+). It functions in the pathway purine metabolism; IMP biosynthesis via de novo pathway; 5-amino-1-(5-phospho-D-ribosyl)imidazole from N(2)-formyl-N(1)-(5-phospho-D-ribosyl)glycinamide: step 1/2. Part of the phosphoribosylformylglycinamidine synthase complex involved in the purines biosynthetic pathway. Catalyzes the ATP-dependent conversion of formylglycinamide ribonucleotide (FGAR) and glutamine to yield formylglycinamidine ribonucleotide (FGAM) and glutamate. The FGAM synthase complex is composed of three subunits. PurQ produces an ammonia molecule by converting glutamine to glutamate. PurL transfers the ammonia molecule to FGAR to form FGAM in an ATP-dependent manner. PurS interacts with PurQ and PurL and is thought to assist in the transfer of the ammonia molecule from PurQ to PurL. The sequence is that of Phosphoribosylformylglycinamidine synthase subunit PurL from Synechococcus sp. (strain CC9902).